The following is a 2198-amino-acid chain: Activating signal cointegrator 1 complex subunit 3 (2198 aa).

S12 bears the Phosphoserine mark. 2 coiled-coil regions span residues 18-81 (KQDN…KQIV) and 328-356 (IQSEQEKQLMKQYRREEKRIARREKKAGE). Residues 487–670 (ETAYNTNENM…FLHVNPYIGL (184 aa)) enclose the Helicase ATP-binding 1 domain. Residue 500–507 (APTGAGKT) participates in ATP binding. K573 is modified (N6-acetyllysine). The short motif at 612–615 (DEVH) is the DEVH box element. One can recognise a Helicase C-terminal 1 domain in the interval 697–915 (QLNNMDEVCY…GTVTNVEEAV (219 aa)). Residues 979–1288 (STDLGRTASH…GAEAVCIINF (310 aa)) enclose the SEC63 1 domain. The 176-residue stretch at 1337–1512 (HTLYHTDCNV…WLNIKQMGLF (176 aa)) folds into the Helicase ATP-binding 2 domain. Residue 1350–1357 (APTGSGKT) coordinates ATP. Residues 1454-1457 (DEIH) carry the DEIH box motif. Residues 1545–1740 (PAFQAIRSHS…VLSDHLNAEI (196 aa)) form the Helicase C-terminal 2 domain. One can recognise an SEC63 2 domain in the interval 1813-2177 (PLTCGRIASY…LGLDQQYDIY (365 aa)).

Belongs to the helicase family. As to quaternary structure, identified in the ASCC complex that contains ASCC1, ASCC2 and ASCC3. Functions as a scaffolding subunit that interacts directly with both ASCC1 and ASCC2. Interacts directly with ALKBH3, and thereby recruits ALKBH3 to the ASCC complex. Part of the ASC-1/TRIP4 complex, that contains TRIP4, ASCC1, ASCC2 and ASCC3. Part of the RQT (ribosome quality control trigger) complex, that contains ASCC2, ASCC3 and TRIP4. Associates with ribosomes; recruited to collided ribosomes. Interacts with ZCCHC4. Interacts with ZNF598. Interacts with RPS3.

The protein localises to the nucleus. Its subcellular location is the nucleus speckle. The protein resides in the cytoplasm. It is found in the cytosol. It carries out the reaction Couples ATP hydrolysis with the unwinding of duplex DNA by translocating in the 3'-5' direction.. The catalysed reaction is ATP + H2O = ADP + phosphate + H(+). Functionally, ATPase involved both in DNA repair and rescue of stalled ribosomes. 3'-5' DNA helicase involved in repair of alkylated DNA: promotes DNA unwinding to generate single-stranded substrate needed for ALKBH3, enabling ALKBH3 to process alkylated N3-methylcytosine (3mC) within double-stranded regions. Also involved in activation of the ribosome quality control (RQC) pathway, a pathway that degrades nascent peptide chains during problematic translation. Drives the splitting of stalled ribosomes that are ubiquitinated in a ZNF598-dependent manner, as part of the ribosome quality control trigger (RQT) complex. Part of the ASC-1 complex that enhances NF-kappa-B, SRF and AP1 transactivation. The protein is Activating signal cointegrator 1 complex subunit 3 (Ascc3) of Mus musculus (Mouse).